The sequence spans 354 residues: Diaminopimelate epimerase, chloroplastic (354 aa).

The N-terminal 44 residues, 1–44 (MSSATAAATATIAAAAAKLAATPAPAPSRRRLTLRGNPTARRCV), are a transit peptide targeting the chloroplast. Catalysis depends on residues cysteine 142 and cysteine 297.

Belongs to the diaminopimelate epimerase family.

The protein localises to the plastid. The protein resides in the chloroplast. The enzyme catalyses (2S,6S)-2,6-diaminopimelate = meso-2,6-diaminopimelate. It participates in amino-acid biosynthesis; L-lysine biosynthesis via DAP pathway; DL-2,6-diaminopimelate from LL-2,6-diaminopimelate: step 1/1. This is Diaminopimelate epimerase, chloroplastic (DAPF) from Oryza sativa subsp. japonica (Rice).